The primary structure comprises 199 residues: Charged multivesicular body protein 1b (199 aa).

Coiled-coil stretches lie at residues 10-48 and 178-199; these read NLKFAAKELNRNSKRCDKEEKAEKAKIKKAIQKGNMEVA and TSVASAEQDELSQRLARLRDQV. The disordered stretch occupies residues 167–199; the sequence is ELPQGQTGSVGTSVASAEQDELSQRLARLRDQV. A compositionally biased stretch (polar residues) spans 170 to 182; sequence QGQTGSVGTSVAS. The MIT-interacting motif signature appears at 186–196; it reads DELSQRLARLR.

It belongs to the SNF7 family. In terms of assembly, probable peripherally associated component of the endosomal sorting required for transport complex III (ESCRT-III).

The protein resides in the cytoplasm. It localises to the cytosol. The protein localises to the endosome. It is found in the late endosome membrane. Functionally, probable peripherally associated component of the endosomal sorting required for transport complex III (ESCRT-III) which is involved in multivesicular bodies (MVBs) formation and sorting of endosomal cargo proteins into MVBs. MVBs contain intraluminal vesicles (ILVs) that are generated by invagination and scission from the limiting membrane of the endosome and mostly are delivered to lysosomes enabling degradation of membrane proteins, such as stimulated growth factor receptors, lysosomal enzymes and lipids. This is Charged multivesicular body protein 1b (CHMP1B) from Gallus gallus (Chicken).